We begin with the raw amino-acid sequence, 382 residues long: V-type proton ATPase subunit C 1 (382 aa).

At Thr-2 the chain carries N-acetylthreonine.

Belongs to the V-ATPase C subunit family. V-ATPase is a heteromultimeric enzyme made up of two complexes: the ATP-hydrolytic V1 complex and the proton translocation V0 complex. The V1 complex consists of three catalytic AB heterodimers that form a heterohexamer, three peripheral stalks each consisting of EG heterodimers, one central rotor including subunits D and F, and the regulatory subunits C and H. The proton translocation complex V0 consists of the proton transport subunit a, a ring of proteolipid subunits c9c'', rotary subunit d, subunits e and f, and the accessory subunits ATP6AP1/Ac45 and ATP6AP2/PRR. Expressed in brain (at protein level).

Its subcellular location is the cytoplasmic vesicle. The protein resides in the secretory vesicle. The protein localises to the synaptic vesicle membrane. It localises to the clathrin-coated vesicle membrane. Subunit of the V1 complex of vacuolar(H+)-ATPase (V-ATPase), a multisubunit enzyme composed of a peripheral complex (V1) that hydrolyzes ATP and a membrane integral complex (V0) that translocates protons. V-ATPase is responsible for acidifying and maintaining the pH of intracellular compartments and in some cell types, is targeted to the plasma membrane, where it is responsible for acidifying the extracellular environment. Subunit C is necessary for the assembly of the catalytic sector of the enzyme and is likely to have a specific function in its catalytic activity. This chain is V-type proton ATPase subunit C 1 (ATP6V1C1), found in Bos taurus (Bovine).